The following is a 509-amino-acid chain: Putative Rieske 2Fe-2S iron-sulfur protein YhfW (509 aa).

Positions lysine 423–aspartate 509 constitute a Rieske domain. [2Fe-2S] cluster-binding residues include cysteine 463, histidine 465, cysteine 481, and histidine 484. A disulfide bridge links cysteine 468 with cysteine 483.

The protein belongs to the Rieske iron-sulfur protein family. The cofactor is [2Fe-2S] cluster.

This is Putative Rieske 2Fe-2S iron-sulfur protein YhfW (yhfW) from Bacillus subtilis (strain 168).